A 368-amino-acid chain; its full sequence is Phosphoserine aminotransferase (368 aa).

Position 42 (R42) interacts with L-glutamate. Pyridoxal 5'-phosphate-binding positions include 76 to 77, W102, T152, D179, and Q202; that span reads AS. An N6-(pyridoxal phosphate)lysine modification is found at K203. 245–246 lines the pyridoxal 5'-phosphate pocket; that stretch reads NT.

This sequence belongs to the class-V pyridoxal-phosphate-dependent aminotransferase family. SerC subfamily. As to quaternary structure, homodimer. Pyridoxal 5'-phosphate is required as a cofactor.

Its subcellular location is the cytoplasm. The enzyme catalyses O-phospho-L-serine + 2-oxoglutarate = 3-phosphooxypyruvate + L-glutamate. The catalysed reaction is 4-(phosphooxy)-L-threonine + 2-oxoglutarate = (R)-3-hydroxy-2-oxo-4-phosphooxybutanoate + L-glutamate. Its pathway is amino-acid biosynthesis; L-serine biosynthesis; L-serine from 3-phospho-D-glycerate: step 2/3. It participates in cofactor biosynthesis; pyridoxine 5'-phosphate biosynthesis; pyridoxine 5'-phosphate from D-erythrose 4-phosphate: step 3/5. In terms of biological role, catalyzes the reversible conversion of 3-phosphohydroxypyruvate to phosphoserine and of 3-hydroxy-2-oxo-4-phosphonooxybutanoate to phosphohydroxythreonine. This Nitrosomonas europaea (strain ATCC 19718 / CIP 103999 / KCTC 2705 / NBRC 14298) protein is Phosphoserine aminotransferase.